The chain runs to 257 residues: Type I iodothyronine deiodinase (257 aa).

Topologically, residues 1–12 (MGLPGLGLLLKR) are extracellular. The helical; Signal-anchor for type III membrane protein transmembrane segment at 13–33 (FGVLVRVALKVAVGKVLLTLW) threads the bilayer. Topologically, residues 34–257 (PSAIRPHLLA…CRSSAQSPRL (224 aa)) are cytoplasmic. Sec-126 is an active-site residue. Sec-126 is a non-standard amino acid (selenocysteine).

The protein belongs to the iodothyronine deiodinase family. As to quaternary structure, predominantly monomer. Can form homodimers but homodimerization is not essential for enzyme activity. In terms of tissue distribution, liver specific.

It localises to the cell membrane. The protein resides in the endoplasmic reticulum membrane. The protein localises to the basolateral cell membrane. The catalysed reaction is 3,3',5-triiodo-L-thyronine + iodide + A + H(+) = L-thyroxine + AH2. It catalyses the reaction 3,3',5'-triiodo-L-thyronine + iodide + A + H(+) = L-thyroxine + AH2. It carries out the reaction 3,3'-diiodo-L-thyronine + iodide + A + H(+) = 3,3',5'-triiodo-L-thyronine + AH2. The enzyme catalyses 3,3'-diiodo-L-thyronine + iodide + A + H(+) = 3,3',5-triiodo-L-thyronine + AH2. The catalysed reaction is 3'-iodo-L-thyronine + iodide + A + H(+) = 3',5'-diiodo-L-thyronine + AH2. It catalyses the reaction 3-iodo-L-thyronine + iodide + A + H(+) = 3,5-diiodo-L-thyronine + AH2. It carries out the reaction 3-iodo-L-thyronine + iodide + A + H(+) = 3,3'-diiodo-L-thyronine + AH2. The enzyme catalyses 3,3'-diiodothyronamine + iodide + A + H(+) = 3,3',5'-triiodothyronamine + AH2. The catalysed reaction is 3'-iodothyronamine + iodide + A + H(+) = 3',5'-diiodothyronamine + AH2. It catalyses the reaction 3-iodothyronamine + iodide + A + H(+) = 3,3'-diiodothyronamine + AH2. It carries out the reaction 3,3'-diiodothyronamine + iodide + A + H(+) = 3,3',5-triiodothyronamine + AH2. The enzyme catalyses 3-iodothyronamine + iodide + A + H(+) = 3,5-diiodothyronamine + AH2. The catalysed reaction is 3,3'-diiodo-L-thyronine sulfate + iodide + A + H(+) = 3,3',5'-triiodo-L-thyronine sulfate + AH2. It catalyses the reaction 3,3',5'-triiodo-L-thyronine sulfate + iodide + A + H(+) = L-thyroxine sulfate + AH2. It carries out the reaction 3,3'-diiodo-L-thyronine sulfate + iodide + A + H(+) = 3,3',5-triiodo-L-thyronine sulfate + AH2. In terms of biological role, plays a crucial role in the metabolism of thyroid hormones (TH) and has specific roles in TH activation and inactivation by deiodination. Catalyzes the deiodination of L-thyroxine (T4) to 3,5,3'-triiodothyronine (T3) and 3',5'-diiodothyronine (3',5'-T2) to 3'-monoiodothyronine (3'-T1) via outer-ring deiodination (ORD). Catalyzes the deiodination of T4 to 3,3',5'-triiodothyronine (rT3), T3 to 3,3'-diiodothyronine (3,3'-T2), 3,5-diiodothyronine (3,5-T2) to 3-monoiodothyronine (3-T1) and 3,3'-T2 to 3-T1 via inner-ring deiodination (IRD). Catalyzes the deiodination of rT3 to 3,3'-T2 via ORD. Catalyzes the phenolic ring deiodinations of 3,3',5'-triiodothyronamine, 3',5'-diiodothyronamine and 3,3'-diiodothyronamine as well as tyrosyl ring deiodinations of 3,5,3'-triiodothyronamine and 3,5-diiodothyronamine. Catalyzes the deiodination of L-thyroxine sulfate and 3,3',5-triiodo-L-thyronine sulfate via IRD and of 3,3',5'-triiodo-L-thyronine sulfate via ORD. The chain is Type I iodothyronine deiodinase (DIO1) from Suncus murinus (Asian house shrew).